Consider the following 290-residue polypeptide: Zinc finger protein-like 1 homolog (290 aa).

The segment at 1 to 43 (MGLCKCPKRQVTTQFCFEHRVNVCENCMVVNHTKCTVQSYIQW) adopts a B box-type; degenerate zinc-finger fold. Residues 53–101 (CPLCGSPLDNEDCVRLICYHVFHWKCLNAKQQSLPANTAPGGHTCPTCS) form an RING-type; atypical zinc finger. The span at 156–168 (NGNTFASSMSQTR) shows a compositional bias: polar residues. The disordered stretch occupies residues 156–175 (NGNTFASSMSQTRSNERPES). A helical membrane pass occupies residues 249-269 (WFLVLGGCIGFVCIIYVLATL).

This sequence belongs to the ZFPL1 family.

The protein localises to the membrane. This is Zinc finger protein-like 1 homolog from Aedes aegypti (Yellowfever mosquito).